The chain runs to 214 residues: RNA pyrophosphohydrolase (214 aa).

One can recognise a Nudix hydrolase domain in the interval 6–149 (GFRPNVGIIL…KRDVYQLALT (144 aa)). Positions 38 to 59 (GGIKYGETPMQAMYRELHEETG) match the Nudix box motif.

Belongs to the Nudix hydrolase family. RppH subfamily. Requires a divalent metal cation as cofactor.

Accelerates the degradation of transcripts by removing pyrophosphate from the 5'-end of triphosphorylated RNA, leading to a more labile monophosphorylated state that can stimulate subsequent ribonuclease cleavage. In Burkholderia cenocepacia (strain ATCC BAA-245 / DSM 16553 / LMG 16656 / NCTC 13227 / J2315 / CF5610) (Burkholderia cepacia (strain J2315)), this protein is RNA pyrophosphohydrolase.